Reading from the N-terminus, the 323-residue chain is Sphingolipid delta(4)-desaturase DES1 (323 aa).

The next 2 membrane-spanning stretches (helical) occupy residues 41–61 (HNLI…FYLV) and 68–88 (WLLF…TLAI). Residues 89 to 93 (HEISH) carry the Histidine box-1 motif. A helical transmembrane segment spans residues 104 to 124 (WNRCFGMFANLPLGLPYSVSF). Residues 128 to 132 (HMDHH) carry the Histidine box-2 motif. A run of 3 helical transmembrane segments spans residues 152 to 172 (FFCT…FYTI), 185 to 205 (LEII…YTLG), and 210 to 230 (FYML…GHFI). Positions 259-263 (HNEHH) match the Histidine box-3 motif.

It belongs to the fatty acid desaturase type 1 family. DEGS subfamily. Interacts with RLBP1; the interaction increases synthesis of chromophore-precursors by DEGS1.

It is found in the endoplasmic reticulum membrane. The catalysed reaction is an N-acylsphinganine + 2 Fe(II)-[cytochrome b5] + O2 + 2 H(+) = an N-acylsphing-4-enine + 2 Fe(III)-[cytochrome b5] + 2 H2O. The enzyme catalyses all-trans-retinol = 11-cis-retinol. It carries out the reaction all-trans-retinol = 9-cis-retinol. It catalyses the reaction all-trans-retinol = 13-cis-retinol. The catalysed reaction is 11-cis-retinol = 13-cis-retinol. The enzyme catalyses 11-cis-retinol = 9-cis-retinol. Has sphingolipid-delta-4-desaturase activity. Converts D-erythro-sphinganine to D-erythro-sphingosine (E-sphing-4-enine). Catalyzes the equilibrium isomerization of retinols. The protein is Sphingolipid delta(4)-desaturase DES1 (degs1) of Xenopus tropicalis (Western clawed frog).